We begin with the raw amino-acid sequence, 500 residues long: Endothelial lipase (500 aa).

A signal peptide spans 1 to 20 (MRNTVFLLGFWSVYCYFPAG). A disulfide bridge connects residues Cys64 and Cys77. N-linked (GlcNAc...) asparagine glycosylation is found at Asn65, Asn80, and Asn136. Residue Ser169 is the Nucleophile of the active site. Asp193 (charge relay system) is an active-site residue. A disulfide bond links Cys252 and Cys272. His274 functions as the Charge relay system in the catalytic mechanism. 2 disulfide bridges follow: Cys297-Cys316 and Cys308-Cys311. A heparin-binding site is contributed by 325-337 (KMRKKRNSKMYLK). A PLAT domain is found at 347-482 (YHYQLKVHMF…SPGQELWFHK (136 aa)). Asn359 and Asn393 each carry an N-linked (GlcNAc...) asparagine glycan. Cys463 and Cys483 are joined by a disulfide. Residue Asn491 is glycosylated (N-linked (GlcNAc...) asparagine).

Belongs to the AB hydrolase superfamily. Lipase family. Head to tail homodimer. In terms of tissue distribution, expressed in placenta, lung, liver, testis and spleen.

The protein localises to the secreted. The enzyme catalyses a triacylglycerol + H2O = a diacylglycerol + a fatty acid + H(+). The catalysed reaction is a 1,2-diacyl-sn-glycero-3-phosphocholine + H2O = a 2-acyl-sn-glycero-3-phosphocholine + a fatty acid + H(+). It carries out the reaction 1,2,3-tri-(9Z-octadecenoyl)-glycerol + H2O = di-(9Z)-octadecenoylglycerol + (9Z)-octadecenoate + H(+). It catalyses the reaction 1,2,3-tributanoylglycerol + H2O = dibutanoylglycerol + butanoate + H(+). The enzyme catalyses 1,2-dihexadecanoyl-sn-glycero-3-phosphocholine + H2O = hexadecanoyl-sn-glycero-3-phosphocholine + hexadecanoate + H(+). Its function is as follows. Exerts both phospholipase and triglyceride lipase activities. More active as a phospholipase than a triglyceride lipase. Hydrolyzes triglycerides, both with short-chain fatty acyl groups (tributyrin) and long-chain fatty acyl groups (triolein) with similar levels of activity toward both types of substrates. Hydrolyzes high density lipoproteins (HDL) more efficiently than other lipoproteins. This is Endothelial lipase (Lipg) from Mus musculus (Mouse).